A 297-amino-acid chain; its full sequence is Polyketide transferase ATR5 (297 aa).

The interval 49–272 (DVAVWFQKRG…FVLAENKGHM (224 aa)) is abhydrolase domain.

The protein belongs to the polyketide transferase af380 family.

It participates in mycotoxin biosynthesis. Functionally, polyketide transferase; part of the core atranone cluster (CAC) which products are predicted to catalyze most or all steps of atranone synthesis, starting from geranylgeranyl pyrophosphate (GGPP). The initial cyclization of GGPP to dolabellane is probably performed by the terpene cyclase ATR13. The Baeyer-Villiger oxidation near the end of the atranone synthesis, which converts atranones D and E to atranones F and G is predicted to be catalyzed by the monooxygenase ATR8. Of the CAC's other predicted gene products, the reducing PKS ATR6 might synthesize a polyketide chain. This polyketide is probably transferred onto the atranone backbone by the polyketide transferase ATR5. Other predicted CAC products include 4 oxygenases (ATR2, ATR3, ATR4, and ATR14), 3 short-chain reductases (ATR7, ATR9, and ATR10), and a methyltransferase (ATR12). These may all be involved in the various steps of atranone biosynthesis, although their specific roles must await experimental determination. The chain is Polyketide transferase ATR5 from Stachybotrys chlorohalonatus (strain IBT 40285).